The primary structure comprises 418 residues: Gamma-glutamyl phosphate reductase (418 aa).

Belongs to the gamma-glutamyl phosphate reductase family.

The protein localises to the cytoplasm. It catalyses the reaction L-glutamate 5-semialdehyde + phosphate + NADP(+) = L-glutamyl 5-phosphate + NADPH + H(+). It participates in amino-acid biosynthesis; L-proline biosynthesis; L-glutamate 5-semialdehyde from L-glutamate: step 2/2. Functionally, catalyzes the NADPH-dependent reduction of L-glutamate 5-phosphate into L-glutamate 5-semialdehyde and phosphate. The product spontaneously undergoes cyclization to form 1-pyrroline-5-carboxylate. This Desulfotalea psychrophila (strain LSv54 / DSM 12343) protein is Gamma-glutamyl phosphate reductase.